The primary structure comprises 420 residues: Sulfate adenylyltransferase (420 aa).

The protein belongs to the sulfate adenylyltransferase family.

It catalyses the reaction sulfate + ATP + H(+) = adenosine 5'-phosphosulfate + diphosphate. It participates in sulfur metabolism; hydrogen sulfide biosynthesis; sulfite from sulfate: step 1/3. This is Sulfate adenylyltransferase from Desulforudis audaxviator (strain MP104C).